A 178-amino-acid polypeptide reads, in one-letter code: Translation initiation factor IF-3 (178 aa).

The segment at 1 to 20 (MRRPFKTDAPVKDGPRSNRE) is disordered.

It belongs to the IF-3 family. As to quaternary structure, monomer.

Its subcellular location is the cytoplasm. In terms of biological role, IF-3 binds to the 30S ribosomal subunit and shifts the equilibrium between 70S ribosomes and their 50S and 30S subunits in favor of the free subunits, thus enhancing the availability of 30S subunits on which protein synthesis initiation begins. This is Translation initiation factor IF-3 from Rhizobium leguminosarum bv. trifolii (strain WSM2304).